Consider the following 528-residue polypeptide: 2-isopropylmalate synthase (528 aa).

The Pyruvate carboxyltransferase domain maps to 12-279 (IRIFDTTLRD…DSSINTPRIV (268 aa)). The Mn(2+) site is built by aspartate 21, histidine 214, histidine 216, and asparagine 250. A regulatory domain region spans residues 401–528 (RLASMTISDV…TTEAPAPATA (128 aa)).

The protein belongs to the alpha-IPM synthase/homocitrate synthase family. LeuA type 1 subfamily. Homodimer. Mn(2+) is required as a cofactor.

It localises to the cytoplasm. The enzyme catalyses 3-methyl-2-oxobutanoate + acetyl-CoA + H2O = (2S)-2-isopropylmalate + CoA + H(+). The protein operates within amino-acid biosynthesis; L-leucine biosynthesis; L-leucine from 3-methyl-2-oxobutanoate: step 1/4. In terms of biological role, catalyzes the condensation of the acetyl group of acetyl-CoA with 3-methyl-2-oxobutanoate (2-ketoisovalerate) to form 3-carboxy-3-hydroxy-4-methylpentanoate (2-isopropylmalate). This chain is 2-isopropylmalate synthase, found in Stenotrophomonas maltophilia (strain R551-3).